A 430-amino-acid polypeptide reads, in one-letter code: Aspartate aminotransferase, mitochondrial (430 aa).

The transit peptide at 1 to 28 directs the protein to the mitochondrion; it reads MALAMMIRNAASKRGMTPISGHFGGLRS. Residues Gly-65, Trp-160, and Asn-213 each coordinate L-aspartate. An N6-(pyridoxal phosphate)lysine modification is found at Lys-277. Position 405 (Arg-405) interacts with L-aspartate.

The protein belongs to the class-I pyridoxal-phosphate-dependent aminotransferase family. As to quaternary structure, homodimer. The cofactor is pyridoxal 5'-phosphate.

It localises to the mitochondrion matrix. It carries out the reaction L-aspartate + 2-oxoglutarate = oxaloacetate + L-glutamate. Its function is as follows. Amino acid aminotransferase important for the metabolism of amino acids and Krebs-cycle related organic acids. No activity with D-Asp or D-Ala as amino donors. In plants, it is involved in nitrogen metabolism and in aspects of carbon and energy metabolism. This Arabidopsis thaliana (Mouse-ear cress) protein is Aspartate aminotransferase, mitochondrial (ASP1).